Consider the following 317-residue polypeptide: Melanocyte-stimulating hormone receptor (317 aa).

The Extracellular portion of the chain corresponds to 1 to 37; the sequence is MPMQGAQRRLLGSLNSIPTATPNLGLAANHTGAPCLE. N-linked (GlcNAc...) asparagine glycosylation is present at Asn-29. A helical transmembrane segment spans residues 38-63; that stretch reads VSIPDWLFLSLGLVSLVQNVLVVAAI. The Cytoplasmic portion of the chain corresponds to 64 to 72; sequence AKNRNLHSP. Residues 73–93 traverse the membrane as a helical segment; it reads MYCFICCLALSDLLVSGSNML. Residues 94 to 118 are Extracellular-facing; the sequence is ETAVILMLEAGALATRASVVQQLQN. The chain crosses the membrane as a helical span at residues 119 to 140; that stretch reads TIDVLTCSSMLCSLCFLGAIAL. Residues 141-163 are Cytoplasmic-facing; that stretch reads DRYVSIFYALRYHSIVTLPRARR. Residues 164 to 183 traverse the membrane as a helical segment; the sequence is AIAATWVASVLSSTLFIAYC. Over 184-191 the chain is Extracellular; it reads DHAAVLLC. The chain crosses the membrane as a helical span at residues 192–211; it reads LVVFFLAMLVLMAVLYVHML. Topologically, residues 212 to 240 are cytoplasmic; sequence ARACQHAQGITRLHKRQLPAHQGFGLRGA. Residues 241-266 traverse the membrane as a helical segment; the sequence is ATLTILLGIFFLCWGPFFLHLMLVVL. At 267–279 the chain is on the extracellular side; that stretch reads CPQHLTCSCIFKN. A helical membrane pass occupies residues 280-300; it reads FKVFLTLIICNTIIDPLIYAF. Over 301-317 the chain is Cytoplasmic; it reads RSQELCRTLKEVLLCSW. Cys-315 carries S-palmitoyl cysteine lipidation.

It belongs to the G-protein coupled receptor 1 family. In terms of assembly, interacts with MGRN1, but does not undergo MGRN1-mediated ubiquitination; this interaction competes with GNAS-binding and thus inhibits agonist-induced cAMP production. Interacts with OPN3; the interaction results in a decrease in MC1R-mediated cAMP signaling and ultimately a decrease in melanin production in melanocytes.

Its subcellular location is the cell membrane. Receptor for MSH (alpha, beta and gamma) and ACTH. The activity of this receptor is mediated by G proteins which activate adenylate cyclase. Mediates melanogenesis, the production of eumelanin (black/brown) and phaeomelanin (red/yellow), via regulation of cAMP signaling in melanocytes. This is Melanocyte-stimulating hormone receptor (MC1R) from Alouatta seniculus (Red howler monkey).